The chain runs to 263 residues: Oxygen-evolving enhancer protein 2-1, chloroplastic (263 aa).

Position 153 is a phosphoserine (S153).

It belongs to the PsbP family. As to quaternary structure, interacts with WAK1.

The protein resides in the plastid. Its subcellular location is the chloroplast thylakoid lumen. In terms of biological role, may be involved in the regulation of photosystem II. This chain is Oxygen-evolving enhancer protein 2-1, chloroplastic (PSBP1), found in Arabidopsis thaliana (Mouse-ear cress).